The sequence spans 1151 residues: Nardilysin (1151 aa).

An N-terminal signal peptide occupies residues 1-20 (MLRRVTVAAVCATRRKLCEA). Disordered stretches follow at residues 53-108 (RNKA…KSPS) and 133-207 (MEGK…KKTT). Residues serine 86, serine 94, and serine 96 each carry the phosphoserine modification. Residues 141–198 (TDDEEEEEVEEEEEDDDEDSGAEIEDDDEEGFDDEDEFDDEHDDDLDTEDNELEELEE) show a composition bias toward acidic residues. A Zn(2+)-binding site is contributed by histidine 233. Glutamate 236 serves as the catalytic Proton acceptor. Histidine 237 and glutamate 314 together coordinate Zn(2+).

Belongs to the peptidase M16 family. Interacts with BACE1 and NRG1. Zn(2+) is required as a cofactor. Primarily in adult heart, skeletal muscle, and testis and at much lower levels in other tissues.

It is found in the mitochondrion. The protein localises to the cell projection. Its subcellular location is the dendrite. It carries out the reaction Hydrolysis of polypeptides, preferably at -Xaa-|-Arg-Lys-, and less commonly at -Arg-|-Arg-Xaa-, in which Xaa is not Arg or Lys.. Its function is as follows. Cleaves peptide substrates on the N-terminus of arginine residues in dibasic pairs. Is a critical activator of BACE1- and ADAM17-mediated pro-neuregulin ectodomain shedding, involved in the positive regulation of axonal maturation and myelination. Required for proper functioning of 2-oxoglutarate dehydrogenase (OGDH). This is Nardilysin from Homo sapiens (Human).